The following is a 313-amino-acid chain: Protease HtpX homolog (313 aa).

Transmembrane regions (helical) follow at residues 7–24 and 29–46; these read AMLL…GYLI and GMMI…FSYW. Residue His130 participates in Zn(2+) binding. The active site involves Glu131. His134 is a Zn(2+) binding site. 2 consecutive transmembrane segments (helical) span residues 145-165 and 172-192; these read ITAT…FFGG and PFGF…AMVV. Position 201 (Glu201) interacts with Zn(2+). A disordered region spans residues 282–313; the sequence is GNAPPASLREDEPGADGPWGRSASRARKGPWS.

This sequence belongs to the peptidase M48B family. It depends on Zn(2+) as a cofactor.

It is found in the cell inner membrane. This is Protease HtpX homolog from Chelativorans sp. (strain BNC1).